We begin with the raw amino-acid sequence, 252 residues long: dITP/XTP pyrophosphatase (252 aa).

7 to 12 (THNEGK) provides a ligand contact to substrate. Residue D74 is the Proton acceptor of the active site. A Mg(2+)-binding site is contributed by D74. Substrate is bound by residues S75 and 193–196 (FGYD). A disordered region spans residues 202 to 229 (DDQPAGRVSTEPDHEGEPLTSAEMTPAE). Substrate-binding positions include K230 and 235–236 (HR).

Belongs to the HAM1 NTPase family. As to quaternary structure, homodimer. It depends on Mg(2+) as a cofactor.

The catalysed reaction is XTP + H2O = XMP + diphosphate + H(+). It catalyses the reaction dITP + H2O = dIMP + diphosphate + H(+). It carries out the reaction ITP + H2O = IMP + diphosphate + H(+). Functionally, pyrophosphatase that catalyzes the hydrolysis of nucleoside triphosphates to their monophosphate derivatives, with a high preference for the non-canonical purine nucleotides XTP (xanthosine triphosphate), dITP (deoxyinosine triphosphate) and ITP. Seems to function as a house-cleaning enzyme that removes non-canonical purine nucleotides from the nucleotide pool, thus preventing their incorporation into DNA/RNA and avoiding chromosomal lesions. This is dITP/XTP pyrophosphatase from Bifidobacterium longum (strain DJO10A).